A 130-amino-acid chain; its full sequence is Fluoride-specific ion channel FluC (130 aa).

The next 4 membrane-spanning stretches (helical) occupy residues 1 to 21, 36 to 56, 65 to 85, and 103 to 123; these read MGEI…RYGL, GTLI…QWGF, LKLM…TFSY, and ILAN…LGSL. Na(+) is bound by residues Gly75 and Thr78.

This sequence belongs to the fluoride channel Fluc/FEX (TC 1.A.43) family.

It is found in the cell membrane. The enzyme catalyses fluoride(in) = fluoride(out). Na(+) is not transported, but it plays an essential structural role and its presence is essential for fluoride channel function. In terms of biological role, fluoride-specific ion channel. Important for reducing fluoride concentration in the cell, thus reducing its toxicity. The sequence is that of Fluoride-specific ion channel FluC from Dehalococcoides mccartyi (strain ATCC BAA-2266 / KCTC 15142 / 195) (Dehalococcoides ethenogenes (strain 195)).